The primary structure comprises 120 residues: Large ribosomal subunit protein eL18 (120 aa).

This sequence belongs to the eukaryotic ribosomal protein eL18 family. In terms of assembly, part of the 50S ribosomal subunit.

In Pyrococcus furiosus (strain ATCC 43587 / DSM 3638 / JCM 8422 / Vc1), this protein is Large ribosomal subunit protein eL18.